The sequence spans 417 residues: Gamma-glutamyl phosphate reductase (417 aa).

The protein belongs to the gamma-glutamyl phosphate reductase family.

It is found in the cytoplasm. It carries out the reaction L-glutamate 5-semialdehyde + phosphate + NADP(+) = L-glutamyl 5-phosphate + NADPH + H(+). Its pathway is amino-acid biosynthesis; L-proline biosynthesis; L-glutamate 5-semialdehyde from L-glutamate: step 2/2. Its function is as follows. Catalyzes the NADPH-dependent reduction of L-glutamate 5-phosphate into L-glutamate 5-semialdehyde and phosphate. The product spontaneously undergoes cyclization to form 1-pyrroline-5-carboxylate. In Haemophilus influenzae (strain PittEE), this protein is Gamma-glutamyl phosphate reductase.